We begin with the raw amino-acid sequence, 604 residues long: Prostaglandin G/H synthase 2 (604 aa).

The first 17 residues, 1 to 17 (MLARALLLCAVLALSHT), serve as a signal peptide directing secretion. One can recognise an EGF-like domain in the interval 18 to 55 (ANPCCSHPCQNRGVCMSVGFDQYKCDCTRTGFYGENCS). Intrachain disulfides connect C21-C32, C22-C145, C26-C42, and C44-C54. The N-linked (GlcNAc...) asparagine glycan is linked to N53. Residue R106 coordinates substrate. The N-linked (GlcNAc...) asparagine glycan is linked to N130. The active-site Proton acceptor is the H193. Substrate is bound at residue Y341. Residue Y371 is the For cyclooxygenase activity of the active site. Residue H374 coordinates heme b. N396 carries an N-linked (GlcNAc...) asparagine glycan. Residue C526 is modified to S-nitrosocysteine. C555 and C561 form a disulfide bridge. The residue at position 565 (S565) is an O-acetylserine. N580 is a glycosylation site (N-linked (GlcNAc...) asparagine).

This sequence belongs to the prostaglandin G/H synthase family. Homodimer. Heme b serves as cofactor. In terms of processing, S-nitrosylation by NOS2 (iNOS) activates enzyme activity. S-nitrosylation may take place on different Cys residues in addition to Cys-526. Post-translationally, acetylated at Ser-565 by SPHK1. During neuroinflammation, acetylation by SPHK1 promotes neuronal secretion of specialized preresolving mediators (SPMs), especially 15-R-lipoxin A4, which results in an increase of phagocytic microglia.

It localises to the microsome membrane. The protein resides in the endoplasmic reticulum membrane. It is found in the nucleus inner membrane. The protein localises to the nucleus outer membrane. The enzyme catalyses (5Z,8Z,11Z,14Z)-eicosatetraenoate + AH2 + 2 O2 = prostaglandin H2 + A + H2O. The catalysed reaction is (5Z,8Z,11Z,14Z)-eicosatetraenoate + 2 O2 = prostaglandin G2. It carries out the reaction prostaglandin G2 + AH2 = prostaglandin H2 + A + H2O. It catalyses the reaction (5Z,8Z,11Z,14Z,17Z)-eicosapentaenoate + 2 O2 = prostaglandin G3. The enzyme catalyses prostaglandin G3 + AH2 = prostaglandin H3 + A + H2O. The catalysed reaction is (8Z,11Z,14Z)-eicosatrienoate + 2 O2 = prostaglandin G1. It carries out the reaction prostaglandin G1 + AH2 = prostaglandin H1 + A + H2O. It catalyses the reaction 2-(5Z,8Z,11Z,14Z)-eicosatetraenoyl-sn-glycero-3-phosphoethanolamine + 2 O2 = 2-(prostaglandin G2)-sn-glycero-3-phosphoethanolamine. The enzyme catalyses 2-(prostaglandin G2)-sn-glycero-3-phosphoethanolamine + AH2 = 2-(prostaglandin H2)-sn-glycero-3-phosphoethanolamine + A + H2O. The catalysed reaction is 2-(5Z,8Z,11Z,14Z)-eicosatetraenoyl-sn-glycero-3-phosphocholine + 2 O2 = 2-(prostaglandin G2)-sn-glycero-3-phosphocholine. It carries out the reaction 2-(prostaglandin G2)-sn-glycero-3-phosphocholine + AH2 = 2-(prostaglandin H2)-sn-glycero-3-phosphocholine + A + H2O. It catalyses the reaction (15S)-hydroperoxy-(5Z,8Z,11Z,13E)-eicosatetraenoate + AH2 = (15S)-hydroxy-(5Z,8Z,11Z,13E)-eicosatetraenoate + A + H2O. The enzyme catalyses 2-(5Z,8Z,11Z,14Z)-eicosatetraenoyl-sn-glycero-3-phosphocholine + AH2 + O2 = 2-[(15S)-hydroxy-(5Z,8Z,11Z,13E)-eicosatetraenoyl]-sn-glycero-3-phosphocholine + A + H2O. The catalysed reaction is 2-(5Z,8Z,11Z,14Z)-eicosatetraenoyl-sn-glycero-3-phosphocholine + AH2 + O2 = 2-[(15R)-hydroxy-(5Z,8Z,11Z,13E)-eicosatetraenoyl]-sn-glycero-3-phosphocholine + A + H2O. It carries out the reaction 2-(5Z,8Z,11Z,14Z)-eicosatetraenoyl-sn-glycero-3-phosphocholine + AH2 + O2 = 2-[(11R)-hydroxy-(5Z,8Z,12E,14Z)-eicosatetraenoyl]-sn-glycero-3-phosphocholine + A + H2O. It catalyses the reaction (9Z,12Z)-octadecadienoate + AH2 + O2 = 9-hydroxy-(10E,12Z)-octadecadienoate + A + H2O. The enzyme catalyses (9Z,12Z)-octadecadienoate + AH2 + O2 = 13-hydroxy-(9Z,11E)-octadecadienoate + A + H2O. The catalysed reaction is (5Z,8Z,11Z,14Z)-eicosatetraenoate + AH2 + O2 = (15R)-hydroxy-(5Z,8Z,11Z,13E)-eicosatetraenoate + A + H2O. It carries out the reaction (5Z,8Z,11Z,14Z)-eicosatetraenoate + AH2 + O2 = (11R)-hydroxy-(5Z,8Z,12E,14Z)-eicosatetraenoate + A + H2O. It catalyses the reaction (5Z,8Z,11Z,14Z,17Z)-eicosapentaenoate + AH2 + O2 = (11R)-hydroxy-(5Z,8Z,12E,14Z,17Z)-eicosapentaenoate + A + H2O. The enzyme catalyses (5Z,8Z,11Z,14Z,17Z)-eicosapentaenoate + AH2 + O2 = (18S)-hydroxy-(5Z,8Z,11Z,14Z,16E)-eicosapentaenoate + A + H2O. The catalysed reaction is (5Z,8Z,11Z,14Z,17Z)-eicosapentaenoate + AH2 + O2 = (18R)-hydroxy-(5Z,8Z,11Z,14Z,16E)-eicosapentaenoate + A + H2O. It carries out the reaction (5Z,8Z,11Z,14Z,17Z)-eicosapentaenoate + AH2 + O2 = (15R)-hydroxy-(5Z,8Z,11Z,13E,17Z)-eicosapentaenoate + A + H2O. It catalyses the reaction (5Z,8Z,11Z,14Z,17Z)-eicosapentaenoate + AH2 + O2 = (15S)-hydroxy-(5Z,8Z,11Z,13E,17Z)-eicosapentaenoate + A + H2O. The enzyme catalyses (7Z,10Z,13Z,16Z,19Z)-docosapentaenoate + AH2 + O2 = 13R-hydroxy-(7Z,10Z,14E,16Z,19Z)-docosapentaenoate + A + H2O. The catalysed reaction is (4Z,7Z,10Z,13Z,16Z,19Z)-docosahexaenoate + AH2 + O2 = 13-hydroxy-(4Z,7Z,10Z,14E,16Z,19Z)-docosahexaenoate + A + H2O. It carries out the reaction (5S)-hydroxy-(6E,8Z,11Z,14Z)-eicosatetraenoate + AH2 + O2 = (5S,15R)-dihydroxy-(6E,8Z,11Z,13E)-eicosatetraenoate + A + H2O. It catalyses the reaction (4Z,7Z,10Z,13Z,16Z,19Z)-docosahexaenoate + AH2 + O2 = 17R-hydroxy-(4Z,7Z,10Z,13Z,15E,19Z)-docosahexaenoate + A + H2O. The enzyme catalyses (5S)-hydroxy-(6E,8Z,11Z,14Z)-eicosatetraenoate + AH2 + O2 = (5S,15S)-dihydroxy-(6E,8Z,11Z,13E)-eicosatetraenoate + A + H2O. The catalysed reaction is (5S)-hydroxy-(6E,8Z,11Z,14Z)-eicosatetraenoate + AH2 + O2 = (5S,11R)-dihydroxy-(6E,8Z,12E,14Z)-eicosatetraenoate + A + H2O. It carries out the reaction 2-(5Z,8Z,11Z,14Z-eicosatetraenoyl)-glycerol + 2 O2 = 2-glyceryl-prostaglandin G2. It catalyses the reaction 2-glyceryl-prostaglandin G2 + AH2 = 2-glyceryl-prostaglandin H2 + A + H2O. The enzyme catalyses (5Z,8Z,11Z,14Z)-eicosatetraenoate + O2 = (15R)-hydroperoxy-(5Z,8Z,11Z,13E)-eicosatetraenoate. The catalysed reaction is (5Z,8Z,11Z,14Z)-eicosatetraenoate + O2 = 11R-hydroperoxy-(5Z,8Z,12E,14Z)-eicosatetraenoate. It carries out the reaction (9Z,12Z)-octadecadienoate + AH2 + O2 = (9R)-hydroxy-(10E,12Z)-octadecadienoate + A + H2O. It catalyses the reaction (9Z,12Z)-octadecadienoate + AH2 + O2 = (9S)-hydroxy-(10E,12Z)-octadecadienoate + A + H2O. The enzyme catalyses (9Z,12Z)-octadecadienoate + AH2 + O2 = (13S)-hydroxy-(9Z,11E)-octadecadienoate + A + H2O. The catalysed reaction is (9Z,12Z)-octadecadienoate + AH2 + O2 = (13R)-hydroxy-(9Z,11E)-octadecadienoate + A + H2O. Its pathway is lipid metabolism; prostaglandin biosynthesis. The cyclooxygenase activity is inhibited by nonsteroidal anti-inflammatory drugs (NSAIDs) including aspirin, ibuprofen, flurbiprofen, celecoxib, flufenamic, mefenamic and tolfenamic acids as well as by hydroperoxide scavenger erythrocyte glutathione peroxidase GPX1. Aspirin triggers enzyme acetylation turning off its ability to generate pro-inflammatory prostaglandins, but switches on its capacity to produce anti-inflammatory lipid mediators involved in inflammation resolution. Aspirin enhances lipoxygenase-type activity toward production of epimers with R stereochemistry such as 15R-HETE, 18R-HEPE, 15R-HEPE and 17R-HDHA. Atorvastatin, a cholesterol-lowering drug, triggers enzyme S-nitrosylation increasing production of 13-series resolvins (RvTs). Dual cyclooxygenase and peroxidase in the biosynthesis pathway of prostanoids, a class of C20 oxylipins mainly derived from arachidonate ((5Z,8Z,11Z,14Z)-eicosatetraenoate, AA, C20:4(n-6)), with a particular role in the inflammatory response. The cyclooxygenase activity oxygenates AA to the hydroperoxy endoperoxide prostaglandin G2 (PGG2), and the peroxidase activity reduces PGG2 to the hydroxy endoperoxide prostaglandin H2 (PGH2), the precursor of all 2-series prostaglandins and thromboxanes. This complex transformation is initiated by abstraction of hydrogen at carbon 13 (with S-stereochemistry), followed by insertion of molecular O2 to form the endoperoxide bridge between carbon 9 and 11 that defines prostaglandins. The insertion of a second molecule of O2 (bis-oxygenase activity) yields a hydroperoxy group in PGG2 that is then reduced to PGH2 by two electrons. Similarly catalyzes successive cyclooxygenation and peroxidation of dihomo-gamma-linoleate (DGLA, C20:3(n-6)) and eicosapentaenoate (EPA, C20:5(n-3)) to corresponding PGH1 and PGH3, the precursors of 1- and 3-series prostaglandins. In an alternative pathway of prostanoid biosynthesis, converts 2-arachidonoyl lysophopholipids to prostanoid lysophopholipids, which are then hydrolyzed by intracellular phospholipases to release free prostanoids. Metabolizes 2-arachidonoyl glycerol yielding the glyceryl ester of PGH2, a process that can contribute to pain response. Generates lipid mediators from n-3 and n-6 polyunsaturated fatty acids (PUFAs) via a lipoxygenase-type mechanism. Oxygenates PUFAs to hydroperoxy compounds and then reduces them to corresponding alcohols. Plays a role in the generation of resolution phase interaction products (resolvins) during both sterile and infectious inflammation. Metabolizes docosahexaenoate (DHA, C22:6(n-3)) to 17R-HDHA, a precursor of the D-series resolvins (RvDs). As a component of the biosynthetic pathway of E-series resolvins (RvEs), converts eicosapentaenoate (EPA, C20:5(n-3)) primarily to 18S-HEPE that is further metabolized by ALOX5 and LTA4H to generate 18S-RvE1 and 18S-RvE2. In vascular endothelial cells, converts docosapentaenoate (DPA, C22:5(n-3)) to 13R-HDPA, a precursor for 13-series resolvins (RvTs) shown to activate macrophage phagocytosis during bacterial infection. In activated leukocytes, contributes to oxygenation of hydroxyeicosatetraenoates (HETE) to diHETES (5,15-diHETE and 5,11-diHETE). Can also use linoleate (LA, (9Z,12Z)-octadecadienoate, C18:2(n-6)) as substrate and produce hydroxyoctadecadienoates (HODEs) in a regio- and stereospecific manner, being (9R)-HODE ((9R)-hydroxy-(10E,12Z)-octadecadienoate) and (13S)-HODE ((13S)-hydroxy-(9Z,11E)-octadecadienoate) its major products. During neuroinflammation, plays a role in neuronal secretion of specialized preresolving mediators (SPMs) 15R-lipoxin A4 that regulates phagocytic microglia. The polypeptide is Prostaglandin G/H synthase 2 (Homo sapiens (Human)).